An 88-amino-acid chain; its full sequence is Defensin-like protein 24 (88 aa).

An N-terminal signal peptide occupies residues 1 to 23; that stretch reads MASSKFVLFAILALSLLLSGTEA. 4 disulfides stabilise this stretch: C37/C87, C47/C72, C56/C83, and C60/C85.

The protein belongs to the DEFL family.

Its subcellular location is the secreted. The polypeptide is Defensin-like protein 24 (Arabidopsis thaliana (Mouse-ear cress)).